The following is a 213-amino-acid chain: MFTGIVQGTAKLVSIDEKPNFRTHVVELPDHMLDGLETGASVAHNGCCLTVTEINGNHVSFDLMKETLRITNLGDLKVGDWVNVERAAKFSDEIGGHLMSGHIMTTAEVAKILTSENNRQIWFKVQDSQLMKYILYKGFIGIDGISLTVGEVTPTRFCVHLIPETLERTTLGKKKLGARVNIEIDPQTQAVVDTVERVLAARENAMNQPGTEA.

Lumazine-binding repeat units follow at residues 1 to 97 (MFTG…IGGH) and 98 to 195 (LMSG…VDTV). Residues 4–6 (GIV), 48–50 (CLT), 62–67 (DLMKET), 101–103 (GHI), Lys-137, 146–148 (SLT), and 160–165 (HLIPET) contribute to the 2,4-dihydroxypteridine site.

In terms of assembly, homotrimer. Unlike in B.subtilis, does not interact with 6,7-dimethyl-8-ribityllumazine synthase.

The catalysed reaction is 2 6,7-dimethyl-8-(1-D-ribityl)lumazine + H(+) = 5-amino-6-(D-ribitylamino)uracil + riboflavin. It functions in the pathway cofactor biosynthesis; riboflavin biosynthesis; riboflavin from 2-hydroxy-3-oxobutyl phosphate and 5-amino-6-(D-ribitylamino)uracil: step 2/2. Catalyzes the dismutation of two molecules of 6,7-dimethyl-8-ribityllumazine, resulting in the formation of riboflavin and 5-amino-6-(D-ribitylamino)uracil. This is Riboflavin synthase (ribC) from Escherichia coli (strain K12).